The chain runs to 227 residues: Octanoyltransferase (227 aa).

One can recognise a BPL/LPL catalytic domain in the interval Ala-43 to Glu-218. Residues Arg-82 to His-89, Ser-149 to Gly-151, and Gly-162 to Ala-164 each bind substrate. Cys-180 serves as the catalytic Acyl-thioester intermediate.

This sequence belongs to the LipB family.

Its subcellular location is the cytoplasm. The catalysed reaction is octanoyl-[ACP] + L-lysyl-[protein] = N(6)-octanoyl-L-lysyl-[protein] + holo-[ACP] + H(+). Its pathway is protein modification; protein lipoylation via endogenous pathway; protein N(6)-(lipoyl)lysine from octanoyl-[acyl-carrier-protein]: step 1/2. Catalyzes the transfer of endogenously produced octanoic acid from octanoyl-acyl-carrier-protein onto the lipoyl domains of lipoate-dependent enzymes. Lipoyl-ACP can also act as a substrate although octanoyl-ACP is likely to be the physiological substrate. The polypeptide is Octanoyltransferase (Shewanella denitrificans (strain OS217 / ATCC BAA-1090 / DSM 15013)).